The primary structure comprises 198 residues: Septum-promoting GTP-binding protein 1 (198 aa).

The tract at residues 6–198 (KNNVTIKVGM…GDPILEYIDR (193 aa)) is small GTPase-like. Residues 17 to 24 (GDSSIGKT), 65 to 69 (DLGGQ), and 122 to 125 (TKYD) each bind GTP.

Interacts with cdc7 and cdc11.

Its function is as follows. GTP-binding protein essential for the induction of septum formation at G2 and pre-START stages of mitosis. Acts via the cdc7 protein kinase pathway. The chain is Septum-promoting GTP-binding protein 1 (spg1) from Schizosaccharomyces pombe (strain 972 / ATCC 24843) (Fission yeast).